A 529-amino-acid chain; its full sequence is uncharacterized protein (529 aa).

A disordered region spans residues 1–20 (MGADLKQPQDADSPPKGVSR). The tat-type signal signal peptide spans 1–52 (MGADLKQPQDADSPPKGVSRRRFLTTGAAAVVGTGVGAGGTALLSSHPRGPA).

In terms of processing, predicted to be exported by the Tat system. The position of the signal peptide cleavage has not been experimentally proven.

This is an uncharacterized protein from Mycobacterium tuberculosis (strain CDC 1551 / Oshkosh).